Reading from the N-terminus, the 141-residue chain is Hemoglobin subunit alpha-3 (141 aa).

One can recognise a Globin domain in the interval 1–141 (VLSPADKTNV…VSTVLTSKYR (141 aa)). Residue H58 coordinates O2. Heme b is bound at residue H87.

Belongs to the globin family. Heterotetramer of two alpha chains and two beta chains. As to expression, red blood cells.

Involved in oxygen transport from the lung to the various peripheral tissues. The protein is Hemoglobin subunit alpha-3 of Gorilla gorilla gorilla (Western lowland gorilla).